We begin with the raw amino-acid sequence, 642 residues long: Stress-activated map kinase-interacting protein 1 homolog (642 aa).

In terms of domain architecture, CRIM spans alanine 189 to leucine 314. The segment at isoleucine 603–lysine 642 is disordered. Over residues serine 605–serine 615 the composition is skewed to low complexity.

This sequence belongs to the SIN1 family. In terms of assembly, component of the target of rapamycin complex 2 (TORC2).

Functionally, component of the target of rapamycin complex 2 (TORC2), which transduces signals from growth factors to pathways involved in proliferation, cytoskeletal organization and anabolic output. In response to growth factors, TORC2 phosphorylates and activates AGC protein kinase family members, such as Akt1. Within the TORC2 complex, sinh-1 acts as a substrate adapter which recognizes and binds AGC protein kinase family members for phosphorylation by mTor. The polypeptide is Stress-activated map kinase-interacting protein 1 homolog (sinh-1) (Caenorhabditis elegans).